A 110-amino-acid chain; its full sequence is Large ribosomal subunit protein uL24 (110 aa).

This sequence belongs to the universal ribosomal protein uL24 family. In terms of assembly, part of the 50S ribosomal subunit.

One of two assembly initiator proteins, it binds directly to the 5'-end of the 23S rRNA, where it nucleates assembly of the 50S subunit. Functionally, one of the proteins that surrounds the polypeptide exit tunnel on the outside of the subunit. The chain is Large ribosomal subunit protein uL24 from Desulfovibrio desulfuricans (strain ATCC 27774 / DSM 6949 / MB).